Reading from the N-terminus, the 170-residue chain is Small ribosomal subunit protein bS18c (170 aa).

The interval 1-61 (MYTSKQPFLK…RRPRIGPGDR (61 aa)) is disordered. Over residues 13-26 (QPFSKSKQTFNKSK) the composition is skewed to polar residues. The segment covering 27 to 55 (QPFRKSKQTFRKFKQPFRKSKQPFRRRPR) has biased composition (basic residues).

The protein belongs to the bacterial ribosomal protein bS18 family. In terms of assembly, part of the 30S ribosomal subunit.

It localises to the plastid. The protein resides in the chloroplast. The protein is Small ribosomal subunit protein bS18c of Hordeum vulgare (Barley).